The primary structure comprises 937 residues: Protein translocase subunit SecA (937 aa).

ATP is bound by residues Gln-90, 108–112 (GEGKT), and Asp-509.

Belongs to the SecA family. As to quaternary structure, monomer and homodimer. Part of the essential Sec protein translocation apparatus which comprises SecA, SecYEG and auxiliary proteins SecDF. Other proteins may also be involved.

It localises to the cell inner membrane. It is found in the cellular thylakoid membrane. The protein localises to the cytoplasm. The catalysed reaction is ATP + H2O + cellular proteinSide 1 = ADP + phosphate + cellular proteinSide 2.. Part of the Sec protein translocase complex. Interacts with the SecYEG preprotein conducting channel. Has a central role in coupling the hydrolysis of ATP to the transfer of proteins into and across the cell membrane, serving as an ATP-driven molecular motor driving the stepwise translocation of polypeptide chains across the membrane. In terms of biological role, probably participates in protein translocation into and across both the cytoplasmic and thylakoid membranes in cyanobacterial cells. This is Protein translocase subunit SecA from Synechococcus sp. (strain CC9902).